Consider the following 354-residue polypeptide: Vascular endothelial growth factor D (354 aa).

An N-terminal signal peptide occupies residues 1 to 21 (MYREWVVVNVFMMLYVQLVQG). The propeptide at 22-88 (SSNEHGPVKR…SRSASHRSTR (67 aa)) is or 99 (in a minor form). Intrachain disulfides connect cysteine 111–cysteine 153, cysteine 142–cysteine 189, and cysteine 146–cysteine 191. N-linked (GlcNAc...) asparagine glycans are attached at residues asparagine 155 and asparagine 185. A propeptide spanning residues 206 to 354 (SIQIPEEDRC…AQGPHSRKNP (149 aa)) is cleaved from the precursor. A 1; approximate repeat occupies 222–237 (CPIDMLWDSNKCKCVL). The tract at residues 222–318 (CPIDMLWDSN…PDTCSCEDRC (97 aa)) is 4 X 16 AA repeats of C-X(10)-C-X-C-X(1,3)-C. A run of 3 repeats spans residues 258 to 273 (CGPH…ECVC), 277 to 293 (CPKD…CFEC), and 301 to 318 (CQKH…EDRC). An N-linked (GlcNAc...) asparagine glycan is attached at asparagine 287.

The protein belongs to the PDGF/VEGF growth factor family. In terms of assembly, homodimer; non-covalent and antiparallel. Post-translationally, undergoes a complex proteolytic maturation which generates a variety of processed secreted forms with increased activity toward VEGFR-3 and VEGFR-2. VEGF-D first form an antiparallel homodimer linked by disulfide bonds before secretion. The fully processed VEGF-D is composed mostly of two VEGF homology domains (VHDs) bound by non-covalent interactions. Highly expressed in lung, heart, small intestine and fetal lung, and at lower levels in skeletal muscle, colon, and pancreas.

It is found in the secreted. Functionally, growth factor active in angiogenesis, lymphangiogenesis and endothelial cell growth, stimulating their proliferation and migration and also has effects on the permeability of blood vessels. May function in the formation of the venous and lymphatic vascular systems during embryogenesis, and also in the maintenance of differentiated lymphatic endothelium in adults. Binds and activates VEGFR-2 (KDR/FLK1) and VEGFR-3 (FLT4) receptors. The chain is Vascular endothelial growth factor D from Homo sapiens (Human).